We begin with the raw amino-acid sequence, 102 residues long: Small ribosomal subunit protein uS10 (102 aa).

Belongs to the universal ribosomal protein uS10 family. Part of the 30S ribosomal subunit.

In terms of biological role, involved in the binding of tRNA to the ribosomes. This chain is Small ribosomal subunit protein uS10, found in Macrococcus caseolyticus (strain JCSC5402) (Macrococcoides caseolyticum).